The following is a 344-amino-acid chain: HTH-type transcriptional regulator XC_2801 (344 aa).

The HTH lysR-type domain maps to 3–60 (HDLNDTLIFVKVVEQGSFIAAANSLGLPKTTVSRKVQELETRLGARLLHRTTRRIGLT). Positions 20 to 39 (FIAAANSLGLPKTTVSRKVQ) form a DNA-binding region, H-T-H motif.

This sequence belongs to the LysR transcriptional regulatory family. In terms of assembly, interacts with the cyclic di-GMP effector XC_3703.

Activity is regulated by cyclic di-GMP. Cyclic di-GMP specifically binds to XC_3703, which inhibits the interaction of the XC_2801-XC_3703 complex with DNA and prevents the transcription of the target genes. Functionally, transcriptional regulator that directly or indirectly regulates the expression of virulence-related genes, including flhB, aaeA, fliL and flgG. Binds to the promoter of the target genes only in the presence of XC_3703. The sequence is that of HTH-type transcriptional regulator XC_2801 from Xanthomonas campestris pv. campestris (strain 8004).